A 228-amino-acid polypeptide reads, in one-letter code: MLLELISYAGTVSGFLFLTLSIASGLYYISELVEEHTEPTRRFLTRAIYGIILILILLLLLDGFPFKLTLFSIACYIVYYQNLKSFPFISLTSPTFLLSCVCVVLNHYFWFKYFNDTEVPPQFKFDPNYIPRRRASFAEVASFFGICVWFIPFALFVSLSAGDYVLPTTSEQHMAKKNDDITTNNQPKFRKRAVGLARVVINSVRKYIYSLARVFGYEIEPDFDRLAV.

Position 1 (Met-1) is a topological domain, cytoplasmic. The helical transmembrane segment at Leu-2–Ile-22 threads the bilayer. Topologically, residues Ala-23–Arg-42 are lumenal. Residues Phe-43–Leu-59 form a helical membrane-spanning segment. The Cytoplasmic segment spans residues Leu-60 to Phe-88. A helical membrane pass occupies residues Ile-89 to Leu-105. At Asn-106–Ser-142 the chain is on the lumenal side. Residue Asn-115 is glycosylated (N-linked (GlcNAc...) asparagine). Residues Phe-143–Leu-166 traverse the membrane as a helical segment. Topologically, residues Pro-167 to Val-228 are cytoplasmic.

It belongs to the SVP26 family. Interacts with itself. Interacts with KTR3, MNN2 and MNN5. In terms of processing, N-glycosylated.

The protein localises to the golgi apparatus. The protein resides in the cis-Golgi network membrane. Plays a role in retention of a subset of membrane proteins in the early Golgi compartments. Facilitates endoplasmic reticulum to Golgi transport of mannosyltransferases MNN2 and MNN5. The chain is Protein SVP26 (SVP26) from Saccharomyces cerevisiae (strain ATCC 204508 / S288c) (Baker's yeast).